Here is a 143-residue protein sequence, read N- to C-terminus: Transcriptional regulator MraZ (143 aa).

SpoVT-AbrB domains are found at residues 5–47 (EYKH…SLKE) and 76–119 (ACEC…SENN).

The protein belongs to the MraZ family. As to quaternary structure, forms oligomers.

The protein localises to the cytoplasm. Its subcellular location is the nucleoid. The sequence is that of Transcriptional regulator MraZ from Caldicellulosiruptor bescii (strain ATCC BAA-1888 / DSM 6725 / KCTC 15123 / Z-1320) (Anaerocellum thermophilum).